The chain runs to 202 residues: 3-isopropylmalate dehydratase small subunit (202 aa).

This sequence belongs to the LeuD family. LeuD type 1 subfamily. Heterodimer of LeuC and LeuD.

It carries out the reaction (2R,3S)-3-isopropylmalate = (2S)-2-isopropylmalate. It participates in amino-acid biosynthesis; L-leucine biosynthesis; L-leucine from 3-methyl-2-oxobutanoate: step 2/4. Catalyzes the isomerization between 2-isopropylmalate and 3-isopropylmalate, via the formation of 2-isopropylmaleate. The sequence is that of 3-isopropylmalate dehydratase small subunit from Caulobacter vibrioides (strain ATCC 19089 / CIP 103742 / CB 15) (Caulobacter crescentus).